A 260-amino-acid chain; its full sequence is Snake venom serine protease pallabin (260 aa).

The signal sequence occupies residues 1 to 18 (MVLIRVLANLLILQLSYA). The propeptide occupies 19–24 (QKSSKL). Positions 25-251 (VIGGDECNIN…HLDWIENIIA (227 aa)) constitute a Peptidase S1 domain. 6 disulfide bridges follow: Cys-31–Cys-163, Cys-50–Cys-66, Cys-98–Cys-258, Cys-142–Cys-212, Cys-174–Cys-191, and Cys-202–Cys-227. His-65 functions as the Charge relay system in the catalytic mechanism. Residue Asn-103 is glycosylated (N-linked (GlcNAc...) asparagine). Asp-110 functions as the Charge relay system in the catalytic mechanism. Ser-206 (charge relay system) is an active-site residue.

The protein belongs to the peptidase S1 family. Snake venom subfamily. Monomer. In terms of tissue distribution, expressed by the venom gland.

Its subcellular location is the secreted. Its function is as follows. Snake venom serine protease that may act in the hemostasis system of the prey. The polypeptide is Snake venom serine protease pallabin (JZTHR5) (Gloydius halys (Chinese water mocassin)).